The sequence spans 382 residues: Probable dual-specificity RNA methyltransferase RlmN (382 aa).

Catalysis depends on glutamate 118, which acts as the Proton acceptor. A Radical SAM core domain is found at 124 to 370 (YDKRVTMCIS…TTVRDTRGSD (247 aa)). Residues cysteine 131 and cysteine 375 are joined by a disulfide bond. Residues cysteine 138, cysteine 142, and cysteine 145 each coordinate [4Fe-4S] cluster. Residues 196–197 (GE), serine 230, 253–255 (SLH), and asparagine 332 contribute to the S-adenosyl-L-methionine site. Residue cysteine 375 is the S-methylcysteine intermediate of the active site.

The protein belongs to the radical SAM superfamily. RlmN family. [4Fe-4S] cluster serves as cofactor.

It is found in the cytoplasm. The enzyme catalyses adenosine(2503) in 23S rRNA + 2 reduced [2Fe-2S]-[ferredoxin] + 2 S-adenosyl-L-methionine = 2-methyladenosine(2503) in 23S rRNA + 5'-deoxyadenosine + L-methionine + 2 oxidized [2Fe-2S]-[ferredoxin] + S-adenosyl-L-homocysteine. It carries out the reaction adenosine(37) in tRNA + 2 reduced [2Fe-2S]-[ferredoxin] + 2 S-adenosyl-L-methionine = 2-methyladenosine(37) in tRNA + 5'-deoxyadenosine + L-methionine + 2 oxidized [2Fe-2S]-[ferredoxin] + S-adenosyl-L-homocysteine. Its function is as follows. Specifically methylates position 2 of adenine 2503 in 23S rRNA and position 2 of adenine 37 in tRNAs. This chain is Probable dual-specificity RNA methyltransferase RlmN, found in Kocuria rhizophila (strain ATCC 9341 / DSM 348 / NBRC 103217 / DC2201).